We begin with the raw amino-acid sequence, 438 residues long: Thymidine phosphorylase (438 aa).

The protein belongs to the thymidine/pyrimidine-nucleoside phosphorylase family. As to quaternary structure, homodimer.

The catalysed reaction is thymidine + phosphate = 2-deoxy-alpha-D-ribose 1-phosphate + thymine. It functions in the pathway pyrimidine metabolism; dTMP biosynthesis via salvage pathway; dTMP from thymine: step 1/2. In terms of biological role, the enzymes which catalyze the reversible phosphorolysis of pyrimidine nucleosides are involved in the degradation of these compounds and in their utilization as carbon and energy sources, or in the rescue of pyrimidine bases for nucleotide synthesis. This chain is Thymidine phosphorylase, found in Agrobacterium fabrum (strain C58 / ATCC 33970) (Agrobacterium tumefaciens (strain C58)).